A 239-amino-acid chain; its full sequence is Large ribosomal subunit protein bL25 (239 aa).

A disordered region spans residues 211-239 (KGKKDKEDEEAEKGTSVASPTTATGGTKK). Residues 226–239 (SVASPTTATGGTKK) are compositionally biased toward polar residues.

It belongs to the bacterial ribosomal protein bL25 family. CTC subfamily. In terms of assembly, part of the 50S ribosomal subunit; part of the 5S rRNA/L5/L18/L25 subcomplex. Contacts the 5S rRNA. Binds to the 5S rRNA independently of L5 and L18.

In terms of biological role, this is one of the proteins that binds to the 5S RNA in the ribosome where it forms part of the central protuberance. The protein is Large ribosomal subunit protein bL25 of Endomicrobium trichonymphae.